The sequence spans 465 residues: UDP-N-acetylmuramate--L-alanine ligase (465 aa).

114–120 (GAHGKTT) is a binding site for ATP.

This sequence belongs to the MurCDEF family.

The protein resides in the cytoplasm. The catalysed reaction is UDP-N-acetyl-alpha-D-muramate + L-alanine + ATP = UDP-N-acetyl-alpha-D-muramoyl-L-alanine + ADP + phosphate + H(+). It participates in cell wall biogenesis; peptidoglycan biosynthesis. Its function is as follows. Cell wall formation. This is UDP-N-acetylmuramate--L-alanine ligase from Syntrophomonas wolfei subsp. wolfei (strain DSM 2245B / Goettingen).